The sequence spans 132 residues: Galectin-2 (132 aa).

The region spanning 4–131 is the Galectin domain; the sequence is ELEVKNMDMK…GFNMSSFKLK (128 aa). An a beta-D-galactoside-binding site is contributed by 65–71; the sequence is WGQEQRE.

In terms of assembly, homodimer.

In terms of biological role, this protein binds beta-galactoside. Its physiological function is not yet known. The protein is Galectin-2 (LGALS2) of Homo sapiens (Human).